A 233-amino-acid chain; its full sequence is MADS-box transcription factor 20 (233 aa).

The 61-residue stretch at 1–61 folds into the MADS-box domain; sequence MGRGKVQVRR…GNLFHYASSH (61 aa). Residues 91-184 enclose the K-box domain; sequence EGSMSYDHIK…PTKAAAPPAC (94 aa).

As to expression, expressed in developing seeds and seedling shoots.

It is found in the nucleus. Functionally, probable transcription factor. This Oryza sativa subsp. japonica (Rice) protein is MADS-box transcription factor 20 (MADS20).